Here is a 152-residue protein sequence, read N- to C-terminus: Ribosome maturation factor RimP (152 aa).

Belongs to the RimP family.

The protein localises to the cytoplasm. Functionally, required for maturation of 30S ribosomal subunits. The protein is Ribosome maturation factor RimP of Francisella tularensis subsp. tularensis (strain FSC 198).